Reading from the N-terminus, the 162-residue chain is Ribosomal RNA large subunit methyltransferase H (162 aa).

Residues leucine 78, glycine 109, and 128-133 (LSALTL) each bind S-adenosyl-L-methionine.

It belongs to the RNA methyltransferase RlmH family. In terms of assembly, homodimer.

Its subcellular location is the cytoplasm. It carries out the reaction pseudouridine(1915) in 23S rRNA + S-adenosyl-L-methionine = N(3)-methylpseudouridine(1915) in 23S rRNA + S-adenosyl-L-homocysteine + H(+). Its function is as follows. Specifically methylates the pseudouridine at position 1915 (m3Psi1915) in 23S rRNA. This chain is Ribosomal RNA large subunit methyltransferase H, found in Psychrobacter cryohalolentis (strain ATCC BAA-1226 / DSM 17306 / VKM B-2378 / K5).